A 264-amino-acid polypeptide reads, in one-letter code: Exodeoxyribonuclease YycJ (264 aa).

Residues His-58, His-60, Asp-62, His-63, and Asp-145 each coordinate a divalent metal cation.

Belongs to the metallo-beta-lactamase superfamily. Requires Fe(2+) as cofactor. Zn(2+) is required as a cofactor. It depends on Mn(2+) as a cofactor.

In terms of biological role, 5'-&gt;3' double-stranded DNA exonuclease. May play a role in mutation mismatch repair (MMR). Required for accurate coordination of cell division with DNA replication. May play a role in cell wall metabolism. This Bacillus anthracis protein is Exodeoxyribonuclease YycJ.